Consider the following 400-residue polypeptide: 2'-5'-oligoadenylate synthase 1 (400 aa).

Residues 13-60 (DKFIEDYLLPDTCFRMQINHAIDIICGFLKERCFRGSSYPVCVSKVVK) form an interaction with dsRNA region. An ATP-binding site is contributed by Ser63. Mg(2+) contacts are provided by Asp75, Asp77, and Asp148. Positions 200–210 (QRPTKLKSLIR) are interaction with dsRNA. ATP contacts are provided by Arg210, Lys213, and Gln229. Cys397 carries the S-geranylgeranyl cysteine lipid modification.

Belongs to the 2-5A synthase family. In terms of assembly, monomer. Homotetramer. Mg(2+) is required as a cofactor. Prenylated at C-terminal. C-terminal prenylation is necessary to initiate a block to SARS-CoV-2 and is associated with protection from severe COVID-1. The prenylated form is targeted to perinuclear structures rich in viral dsRNA, whereas the non-prenylated form is diffusely localized and unable to initiate a detectable block to SARS-CoV-2 replication. C-terminal prenylation is also necessary to initiate a block to cardiovirus EMCV. Post-translationally, not prenylated at C-terminal. The non-prenylated form is diffusely localized and unable to initiate a detectable block to SARS-CoV-2 replication. Expressed in lungs.

The protein localises to the cytoplasm. It localises to the mitochondrion. The protein resides in the nucleus. It is found in the microsome. Its subcellular location is the endoplasmic reticulum. The protein localises to the secreted. The catalysed reaction is 3 ATP = 5'-triphosphoadenylyl-(2'-&gt;5')-adenylyl-(2'-&gt;5')-adenosine + 2 diphosphate. With respect to regulation, produced as a latent enzyme which is activated by dsRNA generated during the course of viral infection. The dsRNA activator must be at least 15 nucleotides long, and no modification of the 2'-hydroxyl group is tolerated. ssRNA or dsDNA do not act as activators. Functionally, interferon-induced, dsRNA-activated antiviral enzyme which plays a critical role in cellular innate antiviral response. In addition, it may also play a role in other cellular processes such as apoptosis, cell growth, differentiation and gene regulation. Synthesizes higher oligomers of 2'-5'-oligoadenylates (2-5A) from ATP which then bind to the inactive monomeric form of ribonuclease L (RNase L) leading to its dimerization and subsequent activation. Activation of RNase L leads to degradation of cellular as well as viral RNA, resulting in the inhibition of protein synthesis, thus terminating viral replication. Can mediate the antiviral effect via the classical RNase L-dependent pathway or an alternative antiviral pathway independent of RNase L. The secreted form displays antiviral effect against vesicular stomatitis virus (VSV), herpes simplex virus type 2 (HSV-2), and encephalomyocarditis virus (EMCV) and stimulates the alternative antiviral pathway independent of RNase L. When prenylated at C-terminal, acts as a double-stranded RNA (dsRNA) sensor specifically targeted to membranous replicative organelles in SARS coronavirus-2/SARS-CoV-2 infected cells where it binds to dsRNA structures in the SARS-CoV-2 5'-UTR and initiates a potent block to SARS-CoV-2 replication. Recognizes short stretches of dsRNA and activates RNase L. The binding is remarkably specific, with two conserved stem loops in the SARS-CoV-2 5'- untranslated region (UTR) constituting the principal viral target. The same mechanism is necessary to initiate a block to cardiovirus EMCV. Its function is as follows. Not prenylated at C-terminal, is diffusely localized and unable to initiate a detectable block to SARS-CoV-2 replication. The protein is 2'-5'-oligoadenylate synthase 1 (OAS1) of Homo sapiens (Human).